A 77-amino-acid polypeptide reads, in one-letter code: UPF0401 protein UTI89_C4989 (77 aa).

The protein belongs to the UPF0401 family.

This Escherichia coli (strain UTI89 / UPEC) protein is UPF0401 protein UTI89_C4989.